A 782-amino-acid chain; its full sequence is Coiled-coil alpha-helical rod protein 1 (782 aa).

Basic and acidic residues-rich tracts occupy residues 62–74 (ERDV…EPGR) and 208–218 (ETRRAGEAKEL). Disordered stretches follow at residues 62-82 (ERDV…WGLE) and 185-218 (AHKE…AKEL). 3 coiled-coil regions span residues 82-314 (EGSQ…ELTR), 344-398 (LMVQ…EVER), and 498-691 (VTDV…QQEG).

It is found in the cytoplasm. It localises to the nucleus. In terms of biological role, may be a regulator of keratinocyte proliferation or differentiation. The polypeptide is Coiled-coil alpha-helical rod protein 1 (CCHCR1) (Gorilla gorilla gorilla (Western lowland gorilla)).